Consider the following 498-residue polypeptide: ATP synthase subunit beta, chloroplastic (498 aa).

Position 172–179 (172–179) interacts with ATP; the sequence is GGAGVGKT.

The protein belongs to the ATPase alpha/beta chains family. F-type ATPases have 2 components, CF(1) - the catalytic core - and CF(0) - the membrane proton channel. CF(1) has five subunits: alpha(3), beta(3), gamma(1), delta(1), epsilon(1). CF(0) has four main subunits: a(1), b(1), b'(1) and c(9-12).

It localises to the plastid. The protein resides in the chloroplast thylakoid membrane. The catalysed reaction is ATP + H2O + 4 H(+)(in) = ADP + phosphate + 5 H(+)(out). Its function is as follows. Produces ATP from ADP in the presence of a proton gradient across the membrane. The catalytic sites are hosted primarily by the beta subunits. This chain is ATP synthase subunit beta, chloroplastic, found in Atropa belladonna (Belladonna).